The sequence spans 290 residues: MAGIDLQSLGISLPPGYSLQTAAARPDMYETLFDPEHPMSSLWPQFITSTPVSEKYWSQLTDIPLFASYQLMILHRDVENKHESVVACGNSVPVYCPLNDLPDGGWEAILQTGIENYRAGHKQHPNLLSALGVTVASAHRQQGLADIVIQTLRALANQAHFEALVVPLRPTKKSEHPMVPLEEYVHWKLDEHARPDDQVSYDPWLRKHLSYGGQMVRIAPRSMTIAAHADQWKDWTGCDLAALAESGSDTSSKGLVEMPIPRALVPVQYDPVSKVASYVEPNVWVVHPIH.

157–163 contacts acetyl-CoA; it reads NQAHFEA.

The protein belongs to the acetyltransferase family. GCN5 subfamily.

It participates in secondary metabolite metabolism. In terms of biological role, arginine N-acetyltransferase; part of the cluster that mediates the biosynthesis of a highly modified cyclo-arginine-tryptophan dipeptide (cRW). Within the pathway, avaD catalyzes the N-acetylation of the guanidine group. The first step of the pathway is perfornmed by the arginine-containing cyclodipeptide synthase (RCPDS) avaA that acts as the scaffold-generating enzyme and is responsible for formation of the cyclo-Arg-Trp (cRW) diketopiperazine. AvaB then acts as a multifunctional flavoenzyme that is responsible for generating the cyclo-Arg-formylkynurenine DKP, which can be deformylated by avaC. AvaB then further catalyzes an additional N-oxidation followed by cyclization and dehydration. The next step is an N-acetylation of the guanidine group catalyzed by the arginine N-acetyltransferase avaD. The roles of the additional enzymes identified within the ava cluster still have to be determined. This Aspergillus versicolor protein is Arginine N-acetyltransferase avaD.